We begin with the raw amino-acid sequence, 431 residues long: Enolase (431 aa).

Q163 contacts (2R)-2-phosphoglycerate. E205 acts as the Proton donor in catalysis. Residues D242, E288, and D315 each coordinate Mg(2+). Residues K340, R369, S370, and K391 each coordinate (2R)-2-phosphoglycerate. K340 (proton acceptor) is an active-site residue.

It belongs to the enolase family. It depends on Mg(2+) as a cofactor.

The protein localises to the cytoplasm. It is found in the secreted. It localises to the cell surface. The catalysed reaction is (2R)-2-phosphoglycerate = phosphoenolpyruvate + H2O. It participates in carbohydrate degradation; glycolysis; pyruvate from D-glyceraldehyde 3-phosphate: step 4/5. In terms of biological role, catalyzes the reversible conversion of 2-phosphoglycerate (2-PG) into phosphoenolpyruvate (PEP). It is essential for the degradation of carbohydrates via glycolysis. This Bacillus cereus (strain B4264) protein is Enolase.